The following is a 304-amino-acid chain: dTDP-4-dehydrorhamnose reductase (304 aa).

Residues 16–18 (GML), 42–43 (DI), and 66–68 (AWT) each bind NADH. NADPH-binding positions include 17 to 18 (ML), 42 to 43 (DI), and 66 to 68 (AWT). A dTDP-beta-L-rhamnose-binding site is contributed by 107-108 (TD). 2 residues coordinate NADH: tyrosine 131 and lysine 135. Positions 131 and 135 each coordinate NADPH. Residue tyrosine 131 is the Proton donor/acceptor of the active site. Tryptophan 157 provides a ligand contact to dTDP-beta-L-rhamnose.

The protein belongs to the dTDP-4-dehydrorhamnose reductase family. In terms of assembly, homodimer. Mg(2+) serves as cofactor.

The enzyme catalyses dTDP-beta-L-rhamnose + NADP(+) = dTDP-4-dehydro-beta-L-rhamnose + NADPH + H(+). Its pathway is carbohydrate biosynthesis; dTDP-L-rhamnose biosynthesis. It functions in the pathway antibiotic biosynthesis; streptomycin biosynthesis. Its function is as follows. Involved in the biosynthesis of the streptose moiety of streptomycin. Catalyzes the reduction of dTDP-6-deoxy-L-lyxo-4-hexulose to yield dTDP-L-rhamnose. RmlD uses NADH and NADPH nearly equally well. This chain is dTDP-4-dehydrorhamnose reductase, found in Streptomyces griseus.